We begin with the raw amino-acid sequence, 201 residues long: Small ribosomal subunit protein uS4c (201 aa).

Positions 16–37 (GALPGLTSKRPRSGSDLRNQSR) are disordered. The S4 RNA-binding domain occupies 89–152 (MRLDNTLFRL…RSRTLIQNHI (64 aa)).

This sequence belongs to the universal ribosomal protein uS4 family. Part of the 30S ribosomal subunit. Contacts protein S5. The interaction surface between S4 and S5 is involved in control of translational fidelity.

The protein resides in the plastid. It localises to the chloroplast. In terms of biological role, one of the primary rRNA binding proteins, it binds directly to 16S rRNA where it nucleates assembly of the body of the 30S subunit. Its function is as follows. With S5 and S12 plays an important role in translational accuracy. This chain is Small ribosomal subunit protein uS4c (rps4), found in Chloranthus spicatus (Chulantree).